We begin with the raw amino-acid sequence, 656 residues long: PAN2-PAN3 deadenylation complex subunit PAN3 (656 aa).

The segment at 15 to 44 (SFKGTQCRNIIIHGYCKFENEGCQFNHGNS) adopts a C3H1-type zinc-finger fold. Positions 71 to 104 (KTSSSFTPGKSPAVRSPDFSSLPAFQPGAPVNDQ) are disordered. The PABPC-interacting motif-2 (PAM-2) signature appears at 128–148 (AFAPSFNPYASESFTPSVSAG). Positions 271 to 525 (QVFPRGSLPD…NIEDFTKLFS (255 aa)) are pseudokinase domain. ATP contacts are provided by residues R325, 375 to 382 (DYYPQSQS), and 428 to 429 (KK). Residues 526 to 564 (HKVLSVVNSLQYNSEYLEQQLSRELENARLFRLMCKLNA) adopt a coiled-coil conformation. The interval 565–656 (IYGRLESRID…IDSTFRALTQ (92 aa)) is knob domain.

Belongs to the protein kinase superfamily. PAN3 family. As to quaternary structure, homodimer. Forms a heterotrimer with a catalytic subunit PAN2 to form the poly(A)-nuclease (PAN) deadenylation complex. Interacts (via PAM-2 motif) with poly(A)-binding protein PAB1 (via PABC domain), conferring substrate specificity of the enzyme complex.

The protein localises to the cytoplasm. Its function is as follows. Regulatory subunit of the poly(A)-nuclease (PAN) deadenylation complex, one of two cytoplasmic mRNA deadenylases involved in mRNA turnover. PAN specifically shortens poly(A) tails of RNA and the activity is stimulated by poly(A)-binding protein PAB1. PAN deadenylation is followed by rapid degradation of the shortened mRNA tails by the CCR4-NOT complex. Deadenylated mRNAs are then degraded by two alternative mechanisms, namely exosome-mediated 3'-5' exonucleolytic degradation, or deadenylation-dependent mRNA decaping and subsequent 5'-3' exonucleolytic degradation by XRN1. May also be involved in post-transcriptional maturation of mRNA poly(A) tails. PAN3 acts as a positive regulator for PAN activity, recruiting the catalytic subunit PAN2 to mRNA via its interaction with RNA and with PAB1. This Kluyveromyces lactis (strain ATCC 8585 / CBS 2359 / DSM 70799 / NBRC 1267 / NRRL Y-1140 / WM37) (Yeast) protein is PAN2-PAN3 deadenylation complex subunit PAN3.